The sequence spans 158 residues: 3-hydroxyacyl-[acyl-carrier-protein] dehydratase FabZ (158 aa).

The active site involves His61.

This sequence belongs to the thioester dehydratase family. FabZ subfamily.

It localises to the cytoplasm. The enzyme catalyses a (3R)-hydroxyacyl-[ACP] = a (2E)-enoyl-[ACP] + H2O. Involved in unsaturated fatty acids biosynthesis. Catalyzes the dehydration of short chain beta-hydroxyacyl-ACPs and long chain saturated and unsaturated beta-hydroxyacyl-ACPs. In Methylobacterium radiotolerans (strain ATCC 27329 / DSM 1819 / JCM 2831 / NBRC 15690 / NCIMB 10815 / 0-1), this protein is 3-hydroxyacyl-[acyl-carrier-protein] dehydratase FabZ.